A 719-amino-acid polypeptide reads, in one-letter code: MTEKAKQSAAVTGSDEIDIGRLVGTVIEARWWVLGTTAIFALCAVIYTFFATPIYSADALVQIEQNAGNSLVQDINSALANKPPASDAEIQLIRSRLVLGKTVDDLDLDIAVTKNTFPLFGAGWERLMGRHNEMVKVTTFTRPETMSGQIFTLKVLGDKRYQLVSDGGFSAQGVVGQPLNKDGVTMRVEAIDARPDTEFTVSKFSTLGMINNLQNNLTVTETGKDTGVLSLTFTGEDRDQIREILNSITRNYLQQDIARKSEEAGKSLAFLAKQLPEVRSRLDVAENKLNAFRQDKDSVDLPLEAKAVLDSMVNIDAQLNELTFKEAEISKLFTKAHPAYRTLLEKRKALEDEKAKLNGRVTAMPKTQQEIVRLTRDVESGQQVYMQLLNKQQELKITEASTVGDVRIVDPAITQPGVLKPKKALIILGSIILGLMLSIVGVLLRSLFNRGIESPQALEEHGISVYASIPLSEWQKARDSVKTIKGIKRYKQSQLLAVGNPTDLAIEAIRSLRTSLHFAMMQAQNNVLMLTGVSPSIGKTFVCANLAAVISQTHKRVLLIDCDMRKGYTHELLGTNNVDGLSDILAGKGEIASCAKPTAIANFDLIPRGQVPPNPSELLMSERFGELIAWASSRYDLVLIDTPPILAVTDAAIVGRHAGTTLMVARYAVNTLKEVETSLSRFDQNGIQVKGVILNSIFRRATGYQDYGYYEYEYQSDSK.

The Cytoplasmic portion of the chain corresponds to 1–30 (MTEKAKQSAAVTGSDEIDIGRLVGTVIEAR). A helical membrane pass occupies residues 31–51 (WWVLGTTAIFALCAVIYTFFA). At 52 to 423 (TPIYSADALV…TQPGVLKPKK (372 aa)) the chain is on the periplasmic side. A helical transmembrane segment spans residues 424–444 (ALIILGSIILGLMLSIVGVLL). At 445–719 (RSLFNRGIES…YEYEYQSDSK (275 aa)) the chain is on the cytoplasmic side. The residue at position 568 (Y568) is a Phosphotyrosine; by autocatalysis. Y707, Y709, Y710, Y712, and Y714 each carry phosphotyrosine.

It belongs to the etk/wzc family. In terms of processing, autophosphorylated. Seems to be phosphorylated through a cooperative two-step mechanism. First, Tyr-568 is phosphorylated in an intramolecular reaction that generates a significant increase of protein kinase activity. Then Tyr-707, Tyr-709, Tyr-710, Tyr-712 and Tyr-714 are phosphorylated in an intermolecular Tyr-568-dependent reaction.

It localises to the cell inner membrane. It catalyses the reaction L-tyrosyl-[protein] + ATP = O-phospho-L-tyrosyl-[protein] + ADP + H(+). The protein operates within glycan metabolism; exopolysaccharide biosynthesis. Dephosphorylated and activated by wzb. Required for the extracellular polysaccharide colanic acid synthesis. The autophosphorylated form is inactive. Probably involved in the export of colanic acid from the cell to medium. The sequence is that of Tyrosine-protein kinase wzc (wzc) from Salmonella typhimurium (strain LT2 / SGSC1412 / ATCC 700720).